The chain runs to 129 residues: Small ribosomal subunit protein uS11 (129 aa).

This sequence belongs to the universal ribosomal protein uS11 family. As to quaternary structure, part of the 30S ribosomal subunit. Interacts with proteins S7 and S18. Binds to IF-3.

Its function is as follows. Located on the platform of the 30S subunit, it bridges several disparate RNA helices of the 16S rRNA. Forms part of the Shine-Dalgarno cleft in the 70S ribosome. In Methylobacterium radiotolerans (strain ATCC 27329 / DSM 1819 / JCM 2831 / NBRC 15690 / NCIMB 10815 / 0-1), this protein is Small ribosomal subunit protein uS11.